Consider the following 314-residue polypeptide: Olfactory receptor 5B3 (314 aa).

Topologically, residues 1-23 are extracellular; sequence MENKTEVTQFILLGLTNDSELQV. 2 N-linked (GlcNAc...) asparagine glycosylation sites follow: N3 and N17. Residues 24–44 form a helical membrane-spanning segment; it reads PLFITFPFIYIITLVGNLGII. Residues 45 to 52 are Cytoplasmic-facing; that stretch reads VLIFWDSC. Residues 53–73 form a helical membrane-spanning segment; that stretch reads LHNPMYFFLSNLSLVDFCYSS. Topologically, residues 74-97 are extracellular; it reads AVTPIVMAGFLIEDKVISYNACAA. An intrachain disulfide couples C95 to C187. A helical membrane pass occupies residues 98 to 118; that stretch reads QMYIFVAFATVENYLLASMAY. Over 119 to 131 the chain is Cytoplasmic; that stretch reads DRYAAVCKPLHYT. The helical transmembrane segment at 132–152 threads the bilayer; sequence TTMTTTVCARLAIGSYLCGFL. The N-linked (GlcNAc...) asparagine glycan is linked to N153. The Extracellular segment spans residues 153-194; that stretch reads NASIHTGDTFSLSFCKSNEVHHFFCDIPAVMVLSCSDRHISE. The chain crosses the membrane as a helical span at residues 195–215; the sequence is LVLIYVVSFNIFIALLVILIS. Topologically, residues 216–235 are cytoplasmic; that stretch reads YTFIFITILKMHSASVYQKP. A helical transmembrane segment spans residues 236–256; sequence LSTCASHFIAVGIFYGTIIFM. The Extracellular segment spans residues 257 to 269; it reads YLQPSSSHSMDTD. The chain crosses the membrane as a helical span at residues 270 to 290; the sequence is KMAPVFYTMVIPMLNPLVYSL. The Cytoplasmic portion of the chain corresponds to 291-314; it reads RNKEVKSAFKKVVEKAKLSVGWSV.

Belongs to the G-protein coupled receptor 1 family.

Its subcellular location is the cell membrane. Odorant receptor. The sequence is that of Olfactory receptor 5B3 (OR5B3) from Homo sapiens (Human).